The chain runs to 368 residues: Mitogen-activated protein kinase 7 (368 aa).

Positions 32 to 319 (YVPIKPIGRG…VTDALLHPYM (288 aa)) constitute a Protein kinase domain. ATP contacts are provided by residues 38 to 46 (IGRGAYGVV) and Lys61. Catalysis depends on Asp158, which acts as the Proton acceptor. At Thr191 the chain carries Phosphothreonine. The short motif at 191–193 (TEY) is the TXY element. Tyr193 is subject to Phosphotyrosine. Residue Thr196 is modified to Phosphothreonine.

The protein belongs to the protein kinase superfamily. CMGC Ser/Thr protein kinase family. MAP kinase subfamily. In terms of assembly, interacts with MKK3. Mg(2+) is required as a cofactor. Post-translationally, dually phosphorylated on Thr-191 and Tyr-193, which activates the enzyme.

It carries out the reaction L-seryl-[protein] + ATP = O-phospho-L-seryl-[protein] + ADP + H(+). It catalyses the reaction L-threonyl-[protein] + ATP = O-phospho-L-threonyl-[protein] + ADP + H(+). Activated by threonine and tyrosine phosphorylation. Activated in response to hydrogen peroxide. Activation is triggered by MAPKKK17 and MAPKKK18 in a MKK3-dependent manner. In terms of biological role, MKK3-MPK7 module acts as a positive regulator of PR1 gene expression. In Arabidopsis thaliana (Mouse-ear cress), this protein is Mitogen-activated protein kinase 7 (MPK7).